We begin with the raw amino-acid sequence, 416 residues long: MKVLVIGGGAREHALCRSLSLDPDVTALHCAPGNAGIAEVAELHQVDALDGAAVTALAGRLGAELVVVGPEAPLVAGVADAVREAGIPVFGPSGEAARLEGSKAFAKDVMACAGVPTARSYVCTNPAEVDAALAAFGAPYVVKDDGLAAGKGVVVTDDVEAARAHANACDRVVVEEFLDGPEVSLFAVTDGENVRPLQPAQDFKRALDGDEGPNTGGMGAYSPLPWADPKLVDEVVQSVLQPTVDEMRRRGTPFSGLLYAGLAITSRGVRVIEFNARFGDPETQVVLARLKTPLAGLLMAAATGNLADLEPLRWSDEAAVTVVVASHNYPGTPRTGDPITGLDEVAAQDAPHAYVLHAGTRAEGDAVVSAGGRVLSVTATGADLTEARDRAYRAVARIGLDGSQHRTDIAAKAAGA.

Positions 107–303 (KDVMACAGVP…LAGLLMAAAT (197 aa)) constitute an ATP-grasp domain. 133-184 (LAAFGAPYVVKDDGLAAGKGVVVTDDVEAARAHANACDRVVVEEFLDGPEVS) contacts ATP. Glu-273 and Asn-275 together coordinate Mg(2+).

The protein belongs to the GARS family. It depends on Mg(2+) as a cofactor. Requires Mn(2+) as cofactor.

It catalyses the reaction 5-phospho-beta-D-ribosylamine + glycine + ATP = N(1)-(5-phospho-beta-D-ribosyl)glycinamide + ADP + phosphate + H(+). It functions in the pathway purine metabolism; IMP biosynthesis via de novo pathway; N(1)-(5-phospho-D-ribosyl)glycinamide from 5-phospho-alpha-D-ribose 1-diphosphate: step 2/2. The protein is Phosphoribosylamine--glycine ligase of Streptomyces coelicolor (strain ATCC BAA-471 / A3(2) / M145).